The sequence spans 134 residues: Small ribosomal subunit protein uS11 (134 aa).

It belongs to the universal ribosomal protein uS11 family. As to quaternary structure, part of the 30S ribosomal subunit. Interacts with proteins S7 and S18. Binds to IF-3.

In terms of biological role, located on the platform of the 30S subunit, it bridges several disparate RNA helices of the 16S rRNA. Forms part of the Shine-Dalgarno cleft in the 70S ribosome. The chain is Small ribosomal subunit protein uS11 from Parafrankia sp. (strain EAN1pec).